Consider the following 721-residue polypeptide: Glucans biosynthesis glucosyltransferase H (721 aa).

Helical transmembrane passes span Cys-52–Phe-72, Asn-97–Ser-117, Ser-412–Ile-432, Phe-459–Phe-479, Ala-505–Gly-525, and Leu-570–Ile-590.

It belongs to the glycosyltransferase 2 family. OpgH subfamily.

It is found in the cell inner membrane. Its pathway is glycan metabolism; osmoregulated periplasmic glucan (OPG) biosynthesis. In terms of biological role, involved in the biosynthesis of osmoregulated periplasmic glucans (OPGs). This Vibrio cholerae serotype O1 (strain ATCC 39541 / Classical Ogawa 395 / O395) protein is Glucans biosynthesis glucosyltransferase H.